A 494-amino-acid polypeptide reads, in one-letter code: Cytochrome P450 2A3 (494 aa).

Ser-131 carries the post-translational modification Phosphoserine. Lys-379 bears the N6-acetyllysine mark. Cys-439 is a heme binding site.

Belongs to the cytochrome P450 family. Heme serves as cofactor. Lung.

Its subcellular location is the endoplasmic reticulum membrane. The protein resides in the microsome membrane. It carries out the reaction an organic molecule + reduced [NADPH--hemoprotein reductase] + O2 = an alcohol + oxidized [NADPH--hemoprotein reductase] + H2O + H(+). Its function is as follows. Cytochromes P450 are a group of heme-thiolate monooxygenases. In liver microsomes, this enzyme is involved in an NADPH-dependent electron transport pathway. It oxidizes a variety of structurally unrelated compounds, including steroids, fatty acids, and xenobiotics. In Rattus norvegicus (Rat), this protein is Cytochrome P450 2A3 (Cyp2a3).